The chain runs to 129 residues: DNA-directed RNA polymerase II subunit RPB9 (129 aa).

Positions 21, 24, 43, 46, 90, 93, 118, and 123 each coordinate Zn(2+). Residues Cys21–Cys46 form a C4-type zinc finger. Residues Glu86–Thr128 form a TFIIS-type zinc finger.

It belongs to the archaeal RpoM/eukaryotic RPA12/RPB9/RPC11 RNA polymerase family. Component of the RNA polymerase II (Pol II) complex consisting of 12 subunits.

It is found in the nucleus. The protein localises to the nucleolus. Its function is as follows. DNA-dependent RNA polymerase catalyzes the transcription of DNA into RNA using the four ribonucleoside triphosphates as substrates. Component of RNA polymerase II which synthesizes mRNA precursors and many functional non-coding RNAs. Pol II is the central component of the basal RNA polymerase II transcription machinery. It is composed of mobile elements that move relative to each other. RPB9 is part of the upper jaw surrounding the central large cleft and thought to grab the incoming DNA template. The protein is DNA-directed RNA polymerase II subunit RPB9 of Drosophila melanogaster (Fruit fly).